Consider the following 243-residue polypeptide: MKIDILTLFPEMFAPLEHSIVGKAKEKGLLDIHYHNFRDYAEKARHVDDEPYGGGQGMLLRAQPIFDTIEQIEAKKPRIILLDPAGKPFTQAYAEELALEEELIFICGHYEGYDERIKTLVTDEISLGDFVLTGGELAAMTIVDATVRLIPQVLGKESSHQDDSFSSGLLEYPQYTRPYDYRGMTVPDVLMSGHHERIRLWRLEESLRKTYLRRPDLLERYDFSEEERKLLDKIKEALGQGED.

S-adenosyl-L-methionine is bound by residues G108 and 127-132 (LGDFVL).

Belongs to the RNA methyltransferase TrmD family. As to quaternary structure, homodimer.

The protein localises to the cytoplasm. It catalyses the reaction guanosine(37) in tRNA + S-adenosyl-L-methionine = N(1)-methylguanosine(37) in tRNA + S-adenosyl-L-homocysteine + H(+). In terms of biological role, specifically methylates guanosine-37 in various tRNAs. In Streptococcus pyogenes serotype M5 (strain Manfredo), this protein is tRNA (guanine-N(1)-)-methyltransferase.